The following is a 438-amino-acid chain: GTPase Der (438 aa).

EngA-type G domains lie at 4-169 (PVVA…PEKG) and 178-353 (IDVA…DQNS). GTP contacts are provided by residues 10–17 (GRPNVGKS), 57–61 (DTGGI), 120–123 (NKVD), 184–191 (GKPNVGKS), 231–235 (DTAGL), and 296–299 (NKWD). The KH-like domain occupies 354-438 (RRVKTGLLNE…PIRLKFKQKT (85 aa)).

It belongs to the TRAFAC class TrmE-Era-EngA-EngB-Septin-like GTPase superfamily. EngA (Der) GTPase family. Associates with the 50S ribosomal subunit.

In terms of biological role, GTPase that plays an essential role in the late steps of ribosome biogenesis. The sequence is that of GTPase Der from Halothermothrix orenii (strain H 168 / OCM 544 / DSM 9562).